The following is a 391-amino-acid chain: DNA primase small subunit PriS (391 aa).

Catalysis depends on residues Asp-98, Asp-100, and Asp-294.

This sequence belongs to the eukaryotic-type primase small subunit family. As to quaternary structure, heterodimer of a small subunit (PriS) and a large subunit (PriL). Mg(2+) is required as a cofactor. Requires Mn(2+) as cofactor.

Functionally, catalytic subunit of DNA primase, an RNA polymerase that catalyzes the synthesis of short RNA molecules used as primers for DNA polymerase during DNA replication. The small subunit contains the primase catalytic core and has DNA synthesis activity on its own. Binding to the large subunit stabilizes and modulates the activity, increasing the rate of DNA synthesis while decreasing the length of the DNA fragments, and conferring RNA synthesis capability. The DNA polymerase activity may enable DNA primase to also catalyze primer extension after primer synthesis. May also play a role in DNA repair. This is DNA primase small subunit PriS from Halobacterium salinarum (strain ATCC 29341 / DSM 671 / R1).